A 230-amino-acid polypeptide reads, in one-letter code: Cytochrome c oxidase subunit 2 (230 aa).

Over 1–14 (MAHPAQLGFQDAAS) the chain is Mitochondrial intermembrane. The helical transmembrane segment at 15 to 45 (PVMEELLCFHDHALMIVFLISTLVLYIIIAM) threads the bilayer. Topologically, residues 46 to 59 (VSTKLTNKFILDSQ) are mitochondrial matrix. Residues 60–87 (EIEIVWTVLPAIILILIALPSLRILYLM) form a helical membrane-spanning segment. The Mitochondrial intermembrane portion of the chain corresponds to 88-230 (DEINDPHVTI…NWSSAMLEDA (143 aa)). Cu cation contacts are provided by histidine 161, cysteine 196, glutamate 198, cysteine 200, histidine 204, and methionine 207. Residue glutamate 198 participates in Mg(2+) binding.

It belongs to the cytochrome c oxidase subunit 2 family. As to quaternary structure, component of the cytochrome c oxidase (complex IV, CIV), a multisubunit enzyme composed of 14 subunits. The complex is composed of a catalytic core of 3 subunits MT-CO1, MT-CO2 and MT-CO3, encoded in the mitochondrial DNA, and 11 supernumerary subunits COX4I, COX5A, COX5B, COX6A, COX6B, COX6C, COX7A, COX7B, COX7C, COX8 and NDUFA4, which are encoded in the nuclear genome. The complex exists as a monomer or a dimer and forms supercomplexes (SCs) in the inner mitochondrial membrane with NADH-ubiquinone oxidoreductase (complex I, CI) and ubiquinol-cytochrome c oxidoreductase (cytochrome b-c1 complex, complex III, CIII), resulting in different assemblies (supercomplex SCI(1)III(2)IV(1) and megacomplex MCI(2)III(2)IV(2)). Found in a complex with TMEM177, COA6, COX18, COX20, SCO1 and SCO2. Interacts with TMEM177 in a COX20-dependent manner. Interacts with COX20. Interacts with COX16. The cofactor is Cu cation.

Its subcellular location is the mitochondrion inner membrane. It carries out the reaction 4 Fe(II)-[cytochrome c] + O2 + 8 H(+)(in) = 4 Fe(III)-[cytochrome c] + 2 H2O + 4 H(+)(out). Its function is as follows. Component of the cytochrome c oxidase, the last enzyme in the mitochondrial electron transport chain which drives oxidative phosphorylation. The respiratory chain contains 3 multisubunit complexes succinate dehydrogenase (complex II, CII), ubiquinol-cytochrome c oxidoreductase (cytochrome b-c1 complex, complex III, CIII) and cytochrome c oxidase (complex IV, CIV), that cooperate to transfer electrons derived from NADH and succinate to molecular oxygen, creating an electrochemical gradient over the inner membrane that drives transmembrane transport and the ATP synthase. Cytochrome c oxidase is the component of the respiratory chain that catalyzes the reduction of oxygen to water. Electrons originating from reduced cytochrome c in the intermembrane space (IMS) are transferred via the dinuclear copper A center (CU(A)) of subunit 2 and heme A of subunit 1 to the active site in subunit 1, a binuclear center (BNC) formed by heme A3 and copper B (CU(B)). The BNC reduces molecular oxygen to 2 water molecules using 4 electrons from cytochrome c in the IMS and 4 protons from the mitochondrial matrix. The polypeptide is Cytochrome c oxidase subunit 2 (mt-co2) (Danio rerio (Zebrafish)).